A 214-amino-acid chain; its full sequence is MTSKGSQEEYDYLYKIVLIGDSGVGKSNLLSRFTRNEFSLETKSTIGVEFATRTIQTEGKTIKAQVWDTAGQERYRAITSAYYRGAVGALLVYDIAKQATYKSVERWILELRENADRNIEIMLVGNKSDLRHLREVSTDEAKEFSEKHKLTFIETSALDSSNVELAFQNILTQIYHIMSRPSHSTGPQTTIDSNTETIILPTTSEPPAAKSGCC.

GTP is bound by residues 20-28, 39-45, 68-72, 126-129, and 156-158; these read GDSGVGKSN, SLETKST, DTAGQ, NKSD, and SAL. The short motif at 42–50 is the Effector region element; the sequence is TKSTIGVEF. S-geranylgeranyl cysteine attachment occurs at residues Cys213 and Cys214.

The protein belongs to the small GTPase superfamily. Rab family.

Its subcellular location is the contractile vacuole membrane. Required for normal contractile vacuole structure and function. Cells expressing a dominant negative rab11A exhibit a more extensive contractile vacuole network and enlarged contractile vacuole bladders. These cells exhibit a functional defect in osmotic regulation where cells immersed in water become rounded and detach from the surface, and contain swollen contractile vacuoles. This chain is Ras-related protein Rab-11A (rab11A), found in Dictyostelium discoideum (Social amoeba).